A 153-amino-acid chain; its full sequence is 3-hydroxyacyl-[acyl-carrier-protein] dehydratase FabZ (153 aa).

His-54 is a catalytic residue.

This sequence belongs to the thioester dehydratase family. FabZ subfamily.

It is found in the cytoplasm. It carries out the reaction a (3R)-hydroxyacyl-[ACP] = a (2E)-enoyl-[ACP] + H2O. In terms of biological role, involved in unsaturated fatty acids biosynthesis. Catalyzes the dehydration of short chain beta-hydroxyacyl-ACPs and long chain saturated and unsaturated beta-hydroxyacyl-ACPs. The protein is 3-hydroxyacyl-[acyl-carrier-protein] dehydratase FabZ of Chlamydia pneumoniae (Chlamydophila pneumoniae).